The sequence spans 1085 residues: Kinesin-like protein cut7 (1085 aa).

Residues 1 to 70 are disordered; it reads MAPRVAPGGS…TDHALHDENE (70 aa). A compositionally biased stretch (polar residues) spans 24 to 37; sequence PVSTPNSHFRSASN. One can recognise a Kinesin motor domain in the interval 72–421; the sequence is NINVVVRVRG…LEYAARAKSI (350 aa). ATP is bound at residue 159–166; the sequence is GQTGTGKT. Coiled coils occupy residues 436–604, 715–740, and 897–955; these read LIKD…WNLK, ISSE…LRSL, and LALA…DSIK. Repeats lie at residues 987–998 and 999–1010; these read DESLCNLETTIE and DTSLVKLETTGD. Phosphothreonine; by CDC2 is present on threonine 1011. Residues 1049–1085 form a disordered region; it reads YTSSNQTNEPDVYDKPSNSSRTSLLRSSRSAYSKMKR. Over residues 1065 to 1078 the composition is skewed to low complexity; it reads SNSSRTSLLRSSRS.

It belongs to the TRAFAC class myosin-kinesin ATPase superfamily. Kinesin family. BimC subfamily.

The protein resides in the cytoplasm. Its subcellular location is the cytoskeleton. The protein localises to the microtubule organizing center. It localises to the spindle pole body. Could be a spindle pole body motor. On transition from G2 to M phase of the cell cycle, the spindle pole body duplicates; the daughter pole bodies seed microtubules which interdigitate to form a short spindle that elongates to span the nucleus at metaphase. Mutations at cut7 block spindle formation. In Schizosaccharomyces pombe (strain 972 / ATCC 24843) (Fission yeast), this protein is Kinesin-like protein cut7 (cut7).